Here is a 342-residue protein sequence, read N- to C-terminus: tRNA-dihydrouridine(20/20a) synthase (342 aa).

FMN-binding positions include Pro-10–Val-12 and Gln-63. The Proton donor role is filled by Cys-93. FMN is bound by residues Lys-132, His-164, Asn-203 to Gly-205, and Gly-225 to Arg-226. The span at Glu-313–Arg-331 shows a compositional bias: basic and acidic residues. Positions Glu-313–Val-342 are disordered.

This sequence belongs to the Dus family. DusA subfamily. FMN is required as a cofactor.

The enzyme catalyses 5,6-dihydrouridine(20) in tRNA + NADP(+) = uridine(20) in tRNA + NADPH + H(+). It carries out the reaction 5,6-dihydrouridine(20) in tRNA + NAD(+) = uridine(20) in tRNA + NADH + H(+). It catalyses the reaction 5,6-dihydrouridine(20a) in tRNA + NADP(+) = uridine(20a) in tRNA + NADPH + H(+). The catalysed reaction is 5,6-dihydrouridine(20a) in tRNA + NAD(+) = uridine(20a) in tRNA + NADH + H(+). Catalyzes the synthesis of 5,6-dihydrouridine (D), a modified base found in the D-loop of most tRNAs, via the reduction of the C5-C6 double bond in target uridines. Specifically modifies U20 and U20a in tRNAs. The sequence is that of tRNA-dihydrouridine(20/20a) synthase (dus) from Thermus thermophilus (strain ATCC 27634 / DSM 579 / HB8).